The sequence spans 551 residues: Eukaryotic translation initiation factor 3 subunit D-2 (551 aa).

The interval threonine 91–phenylalanine 154 is disordered. The span at glutamine 95 to threonine 113 shows a compositional bias: basic residues. Positions alanine 121–threonine 136 are enriched in low complexity. The interval glutamine 290–proline 304 is RNA gate. The segment at proline 527–asparagine 551 is disordered. Residues phenylalanine 531–serine 542 are compositionally biased toward acidic residues.

The protein belongs to the eIF-3 subunit D family. In terms of assembly, component of the eukaryotic translation initiation factor 3 (eIF-3) complex. The eIF-3 complex interacts with pix.

Its subcellular location is the cytoplasm. Its function is as follows. mRNA cap-binding component of the eukaryotic translation initiation factor 3 (eIF-3) complex, which is involved in protein synthesis of a specialized repertoire of mRNAs and, together with other initiation factors, stimulates binding of mRNA and methionyl-tRNAi to the 40S ribosome. The eIF-3 complex specifically targets and initiates translation of a subset of mRNAs involved in cell proliferation. In the eIF-3 complex, eif3d specifically recognizes and binds the 7-methylguanosine cap of a subset of mRNAs. The protein is Eukaryotic translation initiation factor 3 subunit D-2 of Drosophila melanogaster (Fruit fly).